A 465-amino-acid polypeptide reads, in one-letter code: Argininosuccinate lyase (465 aa).

The protein belongs to the lyase 1 family. Argininosuccinate lyase subfamily.

It is found in the cytoplasm. It catalyses the reaction 2-(N(omega)-L-arginino)succinate = fumarate + L-arginine. It functions in the pathway amino-acid biosynthesis; L-arginine biosynthesis; L-arginine from L-ornithine and carbamoyl phosphate: step 3/3. The polypeptide is Argininosuccinate lyase (Hyphomonas neptunium (strain ATCC 15444)).